A 295-amino-acid chain; its full sequence is Sulfotransferase 1A2 (295 aa).

48–53 (KSGTTW) contributes to the 3'-phosphoadenylyl sulfate binding site. Position 106–108 (106–108 (KTH)) interacts with substrate. The Proton acceptor role is filled by H108. Residues R130, S138, Y193, 227 to 232 (TSFKEM), and 255 to 259 (FMRKG) each bind 3'-phosphoadenylyl sulfate.

It belongs to the sulfotransferase 1 family. As to quaternary structure, homodimer.

The protein resides in the cytoplasm. The enzyme catalyses a phenol + 3'-phosphoadenylyl sulfate = an aryl sulfate + adenosine 3',5'-bisphosphate + H(+). Sulfotransferase that utilizes 3'-phospho-5'-adenylyl sulfate (PAPS) as sulfonate donor to catalyze the sulfate conjugation of catecholamines, phenolic drugs and neurotransmitters. Is also responsible for the sulfonation and activation of minoxidil. Mediates the metabolic activation of carcinogenic N-hydroxyarylamines to DNA binding products and could so participate as modulating factor of cancer risk. The polypeptide is Sulfotransferase 1A2 (SULT1A2) (Homo sapiens (Human)).